The chain runs to 249 residues: Protein YIPF4 (249 aa).

The segment covering 1–15 (MQPPGPQQPPPPPLF) has biased composition (pro residues). Residues 1–40 (MQPPGPQQPPPPPLFTPNNGDFTFVSSADAEDPSGSITTP) are disordered. Topologically, residues 1 to 116 (MQPPGPQQPP…LGFNRQVVRD (116 aa)) are cytoplasmic. Residues 16-26 (TPNNGDFTFVS) show a composition bias toward polar residues. A helical transmembrane segment spans residues 117–137 (NPDFWGPLAVVLFFSMISLYG). Position 138 (Q138) is a topological domain, lumenal. A helical transmembrane segment spans residues 139 to 159 (FKVVSWIITIWIFGSLTIFLL). Topologically, residues 160-171 (ARVLGGEVAYGQ) are cytoplasmic. A helical transmembrane segment spans residues 172 to 192 (VLGVIGYSLLPLIVIAPVLLV). At 193–200 (VGSFEVVS) the chain is on the lumenal side. Residues 201-221 (TLIKLFGVFWAAYSAASLLVG) form a helical membrane-spanning segment. The Cytoplasmic portion of the chain corresponds to 222–228 (EEFKTKK). Residues 229 to 249 (PLLIYPIFLLYIYFLSLYTGV) form a helical membrane-spanning segment.

Belongs to the YIP1 family.

It localises to the golgi apparatus. Its subcellular location is the cis-Golgi network membrane. Functionally, involved in the maintenance of the Golgi structure. The chain is Protein YIPF4 (YIPF4) from Gallus gallus (Chicken).